The chain runs to 891 residues: MAPTQDPNSVGGGAKKDEATLKVPSKDPKKKDEKKDEDLSEEDLELKQNLELYVERVQDPNPELQKAALESMRQEIRASTSSMTSVPKPLKFLRPHYGTLKAFHETMADSDLKKYLSDILSVLALTMSADGERESLRFRLIGTEGDIGSWGHEYVRNLAGEIAQEYTKRQSEEASIDDLMELVQQIVAFHMKHNAETEAVDLLMDVEDLDLLLEHVDKTNFKRTCNYLTSAARYLPGPDDMLVLDISYMIYMKFEEYPNALQIALFLDNTQYVKQVFTSCTDLLKKKQFCYMIARHGITFELDDEMVADDDDREALQDIVNNTKLSEGYLTLARDIEVMEAKTPEDIYKAHLLDGRASSGASVDSARQNLAATFVNAFVNAGFGQDKLMTVPSDSTTGSSGNWLFKNKEHGKTSAAASLGMIQLWDVDSGLSQLDKYFHSNDNPIIAGALLGVGIVNCGIKNDCDPALALLGDYIDKEDSSVRIGAIMGLGISYAGSQNDQIRNKLSPILNDAKAPLDVIAFASLSLGMIYVGSCNEEVAQSIIFALMDRSEAELGDALTRFLPLGLGLLYLGKQESVEATAEVSKTFNEKIRKYCDMTLLSCAYAGTGNVLKVQDLLAQCGEHLEKGDIHQGPAVLGLAMVAMSEELGVDMEIRSLERMLQYGEQNIRRAVPLALGLLCISNPKVTVMDTLSRLSHDTDSEVAMSAIISLGLIGAGTNNARIAGMLRNLSSYYYKDMSLLFCVRIAQGLVHMGKGLLTLSPFHSERFLLSPTALAGIVTLLHACLDMKPIILGKYHYVLYFLVLAMQPRMMLTVDENLKPLSVPVRVGQAVDVVGQAGRPKTITGFQTHSTPVLLAAGERAELATDKYIPLSPILEGFIILKENPDYREE.

Positions 1–44 (MAPTQDPNSVGGGAKKDEATLKVPSKDPKKKDEKKDEDLSEEDL) are disordered. Positions 14-21 (AKKDEATL) match the Nuclear localization signal motif. The segment covering 14–37 (AKKDEATLKVPSKDPKKKDEKKDE) has biased composition (basic and acidic residues). Lys218 is covalently cross-linked (Glycyl lysine isopeptide (Lys-Gly) (interchain with G-Cter in ubiquitin)). Thr219 is subject to O-acetylthreonine. PC repeat units follow at residues 414–447 (SAAA…PIIA), 448–484 (GALL…SVRI), 485–519 (GAIM…PLDV), 522–556 (FASL…AELG), 565–594 (LGLG…KIRK), 674–705 (LALG…EVAM), and 724–739 (AGML…KDMS).

Belongs to the proteasome subunit S2 family. In terms of assembly, component of the 19S regulatory particle (RP/PA700) base subcomplex of the 26S proteasome. The 26S proteasome is composed of a core protease (CP), known as the 20S proteasome, capped at one or both ends by the 19S regulatory particle (RP/PA700). The RP/PA700 complex is composed of at least 17 different subunits in two subcomplexes, the base and the lid, which form the portions proximal and distal to the 20S proteolytic core, respectively. Interacts with JMJ27. In terms of tissue distribution, expressed in stems, leaves, buds, flowers, siliques and developing seeds.

The protein resides in the nucleus. It is found in the cytoplasm. Functionally, acts as a regulatory subunit of the 26 proteasome which is involved in the ATP-dependent degradation of ubiquitinated proteins. Required during embryogenesis. Required for optimal plant growth and stress responses. Required for innate immunity. Prevents JMJ27 accumulation in non-drought conditions. The polypeptide is 26S proteasome non-ATPase regulatory subunit 2 homolog A (Arabidopsis thaliana (Mouse-ear cress)).